The sequence spans 570 residues: Proline--tRNA ligase (570 aa).

Belongs to the class-II aminoacyl-tRNA synthetase family. ProS type 1 subfamily. Homodimer.

The protein resides in the cytoplasm. It carries out the reaction tRNA(Pro) + L-proline + ATP = L-prolyl-tRNA(Pro) + AMP + diphosphate. Functionally, catalyzes the attachment of proline to tRNA(Pro) in a two-step reaction: proline is first activated by ATP to form Pro-AMP and then transferred to the acceptor end of tRNA(Pro). As ProRS can inadvertently accommodate and process non-cognate amino acids such as alanine and cysteine, to avoid such errors it has two additional distinct editing activities against alanine. One activity is designated as 'pretransfer' editing and involves the tRNA(Pro)-independent hydrolysis of activated Ala-AMP. The other activity is designated 'posttransfer' editing and involves deacylation of mischarged Ala-tRNA(Pro). The misacylated Cys-tRNA(Pro) is not edited by ProRS. The sequence is that of Proline--tRNA ligase from Thermoanaerobacter pseudethanolicus (strain ATCC 33223 / 39E) (Clostridium thermohydrosulfuricum).